We begin with the raw amino-acid sequence, 506 residues long: Maturase K (506 aa).

It belongs to the intron maturase 2 family. MatK subfamily.

The protein localises to the plastid. Its subcellular location is the chloroplast. In terms of biological role, usually encoded in the trnK tRNA gene intron. Probably assists in splicing its own and other chloroplast group II introns. The protein is Maturase K of Wisteria frutescens (American wisteria).